Here is a 551-residue protein sequence, read N- to C-terminus: Mesoderm induction early response protein 3 (551 aa).

The span at 1-16 (MAEASFGSSSPVGSLS) shows a compositional bias: low complexity. 2 disordered regions span residues 1-62 (MAEA…EKEG) and 113-169 (LSGD…GNSP). A compositionally biased stretch (basic and acidic residues) spans 17-36 (SEDHDFDPTAEMLVHDYDDE). Residues Ser-52, Ser-53, and Ser-114 each carry the phosphoserine modification. A compositionally biased stretch (polar residues) spans 121 to 134 (QSSADDLTPSVTSH). Residues 154-163 (KESEIEDVET) show a composition bias toward acidic residues. Phosphoserine is present on Ser-156. Thr-163 carries the post-translational modification Phosphothreonine. Phosphoserine occurs at positions 165 and 168. The 100-residue stretch at 174–273 (REIMIGLEYQ…EAIERYCCNG (100 aa)) folds into the ELM2 domain. In terms of domain architecture, SANT spans 278–330 (EGMTAWTEEECRSFEHALMLHGKDFHLIQKDKVRSRTVAECVAFYYMWKKSER).

Its subcellular location is the nucleus. Its function is as follows. Transcriptional repressor. In Mus musculus (Mouse), this protein is Mesoderm induction early response protein 3 (Mier3).